Here is a 263-residue protein sequence, read N- to C-terminus: MTMKATMTTPLVLKLGGALLQNETALEQLFTALSEYKSTCTSLILVHGGGCFVDDLLAKMNIESEKKNGLRITPASDIGYITGAYVGTANKVLMAQGIKLGFNVVGLTLADGGISTVTLSTAGLGAVGECEAGDPTLLTALLSGGFLPIISSIGIDAQGLLLNVNADQAATAICETLDADLVMLSDVAGILDADMQLIAEMNSHYADELIMAGVIHGGMEVKVKAALKAAASLNRDIKLASWKVPERLVALLNGEAEGSKVSS.

Residues 49-50 (GG), Arg-71, and Asn-163 contribute to the substrate site.

The protein belongs to the acetylglutamate kinase family. ArgB subfamily.

The protein resides in the cytoplasm. It catalyses the reaction N-acetyl-L-glutamate + ATP = N-acetyl-L-glutamyl 5-phosphate + ADP. It functions in the pathway amino-acid biosynthesis; L-arginine biosynthesis; N(2)-acetyl-L-ornithine from L-glutamate: step 2/4. In terms of biological role, catalyzes the ATP-dependent phosphorylation of N-acetyl-L-glutamate. The chain is Acetylglutamate kinase from Moritella abyssi.